A 1086-amino-acid polypeptide reads, in one-letter code: MKAPSNGFLPSSNEGEKKPINSQLWHACAGPLVSLPPVGSLVVYFPQGHSEQVAASMQKQTDFIPNYPNLPSKLICLLHSVTLHADTETDEVYAQMTLQPVNKYDREALLASDMGLKLNRQPTEFFCKTLTASDTSTHGGFSVPRRAAEKIFPPLDFSMQPPAQEIVAKDLHDTTWTFRHIYRGQPKRHLLTTGWSVFVSTKRLFAGDSVLFVRDEKSQLMLGIRRANRQTPTLSSSVISSDSMHIGILAAAAHANANSSPFTIFFNPRASPSEFVVPLAKYNKALYAQVSLGMRFRMMFETEDCGVRRYMGTVTGISDLDPVRWKGSQWRNLQVGWDESTAGDRPSRVSIWEIEPVITPFYICPPPFFRPKYPRQPGMPDDELDMENAFKRAMPWMGEDFGMKDAQSSMFPGLSLVQWMSMQQNNPLSGSATPQLPSALSSFNLPNNFASNDPSKLLNFQSPNLSSANSQFNKPNTVNHISQQMQAQPAMVKSQQQQQQQQQQHQHQQQQLQQQQQLQMSQQQVQQQGIYNNGTIAVANQVSCQSPNQPTGFSQSQLQQQSMLPTGAKMTHQNINSMGNKGLSQMTSFAQEMQFQQQLEMHNSSQLLRNQQEQSSLHSLQQNLSQNPQQLQMQQQSSKPSPSQQLQLQLLQKLQQQQQQQSIPPVSSSLQPQLSALQQTQSHQLQQLLSSQNQQPLAHGNNSFPASTFMQPPQIQVSPQQQGQMSNKNLVAAGRSHSGHTDGEAPSCSTSPSANNTGHDNVSPTNFLSRNQQQGQAASVSASDSVFERASNPVQELYTKTESRISQGMMNMKSAGEHFRFKSAVTDQIDVSTAGTTYCPDVVGPVQQQQTFPLPSFGFDGDCQSHHPRNNLAFPGNLEAVTSDPLYSQKDFQNLVPNYGNTPRDIETELSSAAISSQSFGIPSIPFKPGCSNEVGGINDSGIMNGGGLWPNQTQRMRTYTKVQKRGSVGRSIDVTRYSGYDELRHDLARMFGIEGQLEDPLTSDWKLVYTDHENDILLVGDDPWEEFVNCVQNIKILSSVEVQQMSLDGDLAAIPTTNQACSETDSGNAWKVHYEDTSAAASFNR.

The segment at residues 126-228 is a DNA-binding region (TF-B3); sequence FCKTLTASDT…QLMLGIRRAN (103 aa). A compositionally biased stretch (polar residues) spans 454 to 485; that stretch reads PSKLLNFQSPNLSSANSQFNKPNTVNHISQQM. Disordered stretches follow at residues 454–504, 545–564, 624–647, and 659–788; these read PSKL…QQQQ, QSPNQPTGFSQSQLQQQSML, LSQNPQQLQMQQQSSKPSPSQQLQ, and QQQS…SVFE. Over residues 486–504 the composition is skewed to low complexity; that stretch reads QAQPAMVKSQQQQQQQQQQ. A compositionally biased stretch (low complexity) spans 659-697; the sequence is QQQSIPPVSSSLQPQLSALQQTQSHQLQQLLSSQNQQPL. The segment covering 700 to 710 has biased composition (polar residues); that stretch reads GNNSFPASTFM. Low complexity predominate over residues 711–724; it reads QPPQIQVSPQQQGQ. A compositionally biased stretch (polar residues) spans 747 to 771; sequence SCSTSPSANNTGHDNVSPTNFLSRN. Over residues 772–785 the composition is skewed to low complexity; sequence QQQGQAASVSASDS. One can recognise a PB1 domain in the interval 958–1051; it reads RTYTKVQKRG…EVQQMSLDGD (94 aa).

It belongs to the ARF family. In terms of assembly, homodimers and heterodimers. Interacts with the auxin-responsive protein IAA1. Binds to JMJ30. Binds to ATXR2 in the nucleus.

The protein localises to the nucleus. In terms of biological role, auxin response factors (ARFs) are transcriptional factors that bind specifically to the DNA sequence 5'-TGTCTC-3' found in the auxin-responsive promoter elements (AuxREs). Could act as transcriptional activator or repressor. Formation of heterodimers with Aux/IAA proteins may alter their ability to modulate early auxin response genes expression. Involved in ethylene responses. Regulates lateral root formation through direct regulation of LBD16 and/or LBD29. Functionally redundant with ARF7. Involved in cellular dedifferentiation during callus formation on callus-inducing medium (CIM) and in an ATXR2-dependent manner. The polypeptide is Auxin response factor 19 (Arabidopsis thaliana (Mouse-ear cress)).